Reading from the N-terminus, the 159-residue chain is MINSEFSIEEHVKYAERLQDERGLTKEDADEEAFRVQLNEVAVINRAIDVGINVSEEEAFQKSQETREDLENEEAENVKEVLIGIQEEIEQLGISEDDYWNEYMLSSYAHAVMREKLMEYEQNENPMKNWNELQQEIIEEFTVSQSQQINEFKREIGMR.

The sequence is that of Glutamate-rich protein GrpA (grpA) from Alkalihalophilus pseudofirmus (strain ATCC BAA-2126 / JCM 17055 / OF4) (Bacillus pseudofirmus).